We begin with the raw amino-acid sequence, 1187 residues long: MAGHEVQYGKHRTRRSFSRIKEVLDLPNLIEIQTDSFKDFLDTGLKEVFEDVLPISNFTDTMELEFVGYELKEPKYTLEEARAHDAHYSAPIFVTFRLINKETGEIKTQEVFFGDFPLMTEMGTFIINGAERIIVSQLVRSPGVYFNDKVDKNGKIGYGSTVIPNRGAWLELETDSKDIAYTRIDRTRKIPFTTLVRALGFSGDDEIIDIFGDSELVRNTIEKDIHKNPNDSRTDEALKEIYERLRPGEPKTADSSRSLLIARFFDARRYDLAAVGRYKINKKLNVKTRLLNQVIAENLVDPETGEILVEAGTEMTRSVIDSIADYLDGDLNKIVYTPNEYAVLTEPVVLQKFKVMAPNDPDRTVTVIGNASPDDKVRHLTPADILAEMSYFLNLAEGLGKVDDIDHLGNRRIRAVGELLANQFRIGLARMERNVRERMSVQDNEVLTPQQIINIRPVTAAIKEFFGSSQLSQFMDQHNPLSELSHKRRLSALGPGGLTRDRAGYEVRDVHYTHYGRMCPIETPEGPNIGLINNLSSYGHLNKYGFIQTPYRKVDRETGKVTNEIEWLTADEEDEFTVAQANSKLNEDGSFAEEIVMGRHQGNNQEFPASSVEYMDVSPKQVVAVATACIPFLENDDSNRALMGANMQRQAVPLIDPKAPFVGTGMEYQAAHDSGAAIIAQHNGKVVYSDADKIEVRREDGSLDVYHVTKFRRSNSGTAYNQRTLVRVGDSVEKGDFIADGPSMEKGEMALGQNPVVAYMTWEGYNFEDAVIMSERLVKDDVYTSVHLEEFESETRDTKLGPEEITREIPNVGEDALKDLDEMGIIRIGAEVKEGDILVGKVTPKGEKDLSAEERLLHAIFGDKSREVRDTSLRVPHGGDGVVCDVKIFTRANGDELQSGVNMLVRVYIAQKRKIKVGDKMAGRHGNKGVVSRIVPVEDMPYLPDGTPVDIMLNPLGVPSRMNIGQVMELHLGMAARNLGIHIATPVFDGATSDDLWETVKEAGMDSDAKTVLYDGRTGEPFDNRVSVGVMYMIKLHHMVDDKLHARSVGPYSTITQQPLGGKAQFGGQRFGEMEVWALEAYGASNVLQEILTYKSDDVTGRLKAYEAITKGKPIPKPGVPESFRVLVKELQSLGLDMRVLDKDDKEVDLRDLDEGEDDDVMHVDDLEKAREKQALEAAEFANSDEK.

It belongs to the RNA polymerase beta chain family. As to quaternary structure, the RNAP catalytic core consists of 2 alpha, 1 beta, 1 beta' and 1 omega subunit. When a sigma factor is associated with the core the holoenzyme is formed, which can initiate transcription.

It catalyses the reaction RNA(n) + a ribonucleoside 5'-triphosphate = RNA(n+1) + diphosphate. Functionally, DNA-dependent RNA polymerase catalyzes the transcription of DNA into RNA using the four ribonucleoside triphosphates as substrates. The polypeptide is DNA-directed RNA polymerase subunit beta (Streptococcus mutans serotype c (strain ATCC 700610 / UA159)).